Here is a 226-residue protein sequence, read N- to C-terminus: 2,3-bisphosphoglycerate-dependent phosphoglycerate mutase (226 aa).

Residues 8 to 15 (RHGQSVWN), 21 to 22 (TG), R58, 109 to 112 (ERMY), K120, 136 to 137 (RR), and 180 to 181 (GN) contribute to the substrate site. Catalysis depends on H9, which acts as the Tele-phosphohistidine intermediate. Residue E109 is the Proton donor/acceptor of the active site.

This sequence belongs to the phosphoglycerate mutase family. BPG-dependent PGAM subfamily.

The catalysed reaction is (2R)-2-phosphoglycerate = (2R)-3-phosphoglycerate. It participates in carbohydrate degradation; glycolysis; pyruvate from D-glyceraldehyde 3-phosphate: step 3/5. Catalyzes the interconversion of 2-phosphoglycerate and 3-phosphoglycerate. The sequence is that of 2,3-bisphosphoglycerate-dependent phosphoglycerate mutase from Chlamydia muridarum (strain MoPn / Nigg).